We begin with the raw amino-acid sequence, 312 residues long: Mycothiol acetyltransferase (312 aa).

N-acetyltransferase domains lie at 8–136 and 149–301; these read PIIR…LPMP and LRLD…HQDH. 1D-myo-inositol 2-(L-cysteinylamino)-2-deoxy-alpha-D-glucopyranoside is bound at residue Glu-38. Acetyl-CoA is bound by residues 77–79 and 85–90; these read LMV and RQGIAT. Residues Glu-175, Lys-215, and Glu-226 each contribute to the 1D-myo-inositol 2-(L-cysteinylamino)-2-deoxy-alpha-D-glucopyranoside site. Residues 230–232 and 237–243 contribute to the acetyl-CoA site; these read LGV and EGKGVGR. Residue Tyr-264 coordinates 1D-myo-inositol 2-(L-cysteinylamino)-2-deoxy-alpha-D-glucopyranoside. Position 269–274 (269–274) interacts with acetyl-CoA; the sequence is NERVVH. A disordered region spans residues 292-312; it reads PAKPARHQDHGRQSSPQERDA. The span at 297 to 312 shows a compositional bias: basic and acidic residues; it reads RHQDHGRQSSPQERDA.

This sequence belongs to the acetyltransferase family. MshD subfamily. In terms of assembly, monomer.

The catalysed reaction is 1D-myo-inositol 2-(L-cysteinylamino)-2-deoxy-alpha-D-glucopyranoside + acetyl-CoA = mycothiol + CoA + H(+). Its function is as follows. Catalyzes the transfer of acetyl from acetyl-CoA to desacetylmycothiol (Cys-GlcN-Ins) to form mycothiol. The sequence is that of Mycothiol acetyltransferase from Propionibacterium freudenreichii subsp. shermanii (strain ATCC 9614 / DSM 4902 / CIP 103027 / NCIMB 8099 / CIRM-BIA1).